An 88-amino-acid chain; its full sequence is Putative membrane protein insertion efficiency factor (88 aa).

Residues 66-88 (DFVPPKKDKNADSEHSCKAHHHH) are disordered. The span at 69-82 (PPKKDKNADSEHSC) shows a compositional bias: basic and acidic residues.

This sequence belongs to the UPF0161 family.

The protein resides in the cell membrane. In terms of biological role, could be involved in insertion of integral membrane proteins into the membrane. In Listeria monocytogenes serotype 4a (strain HCC23), this protein is Putative membrane protein insertion efficiency factor.